A 93-amino-acid chain; its full sequence is Small ribosomal subunit protein uS19 (93 aa).

The protein belongs to the universal ribosomal protein uS19 family.

In terms of biological role, protein S19 forms a complex with S13 that binds strongly to the 16S ribosomal RNA. The sequence is that of Small ribosomal subunit protein uS19 from Geobacter metallireducens (strain ATCC 53774 / DSM 7210 / GS-15).